The sequence spans 492 residues: Probable cytochrome P450 313a3 (492 aa).

Cys438 provides a ligand contact to heme.

This sequence belongs to the cytochrome P450 family. The cofactor is heme.

The protein resides in the endoplasmic reticulum membrane. It localises to the microsome membrane. Functionally, may be involved in the metabolism of insect hormones and in the breakdown of synthetic insecticides. This chain is Probable cytochrome P450 313a3 (Cyp313a3), found in Drosophila melanogaster (Fruit fly).